The chain runs to 302 residues: Pseudouridine-5'-phosphate glycosidase (302 aa).

Glutamate 25 acts as the Proton donor in catalysis. Substrate is bound by residues lysine 86 and valine 106. Aspartate 138 is a Mn(2+) binding site. 140 to 142 (SAD) contributes to the substrate binding site. Lysine 159 serves as the catalytic Nucleophile.

It belongs to the pseudouridine-5'-phosphate glycosidase family. In terms of assembly, homotrimer. Mn(2+) serves as cofactor.

The catalysed reaction is D-ribose 5-phosphate + uracil = psi-UMP + H2O. Its function is as follows. Catalyzes the reversible cleavage of pseudouridine 5'-phosphate (PsiMP) to ribose 5-phosphate and uracil. Functions biologically in the cleavage direction, as part of a pseudouridine degradation pathway. The protein is Pseudouridine-5'-phosphate glycosidase of Glaesserella parasuis serovar 5 (strain SH0165) (Haemophilus parasuis).